The following is a 303-amino-acid chain: Probable 5-dehydro-4-deoxyglucarate dehydratase (303 aa).

Belongs to the DapA family.

The catalysed reaction is 5-dehydro-4-deoxy-D-glucarate + H(+) = 2,5-dioxopentanoate + CO2 + H2O. Its pathway is carbohydrate acid metabolism; D-glucarate degradation; 2,5-dioxopentanoate from D-glucarate: step 2/2. The sequence is that of Probable 5-dehydro-4-deoxyglucarate dehydratase from Pseudomonas putida (strain W619).